Consider the following 72-residue polypeptide: MKLTCVVIVVVLFLTACQLITADDSRRTQKHRALRSTTKLSLSTRCRIPNQKCFQHLDDCCSRKCNRFNKCV.

Residues 1-22 (MKLTCVVIVVVLFLTACQLITA) form the signal peptide. Residues 23–45 (DDSRRTQKHRALRSTTKLSLSTR) constitute a propeptide that is removed on maturation. 3 cysteine pairs are disulfide-bonded: C46-C61, C53-C65, and C60-C71. Position 49 is a 4-hydroxyproline (P49).

Belongs to the conotoxin O1 superfamily. In terms of processing, this toxin is not amidated at the C-terminal Val residue. As to expression, expressed by the venom duct.

The protein resides in the secreted. In terms of biological role, kappa-conotoxins bind and inhibit voltage-gated potassium channels (Kv). This toxin inhibits the drosophila Shaker channel (IC(50)=57-80 nM). In vivo, when tested in fish, this toxin induces hyperactivity, followed by continuous contraction and extension of major fins, without immobilization or death. Injection of this peptide together with the delta-conotoxin PVIA causes the sudden tetanus of prey (STOP) syndrome, which is a single, lethal 'fin-pop' in envenomed fish. When tested in mice, induces hyperactivity. This Conus purpurascens (Purple cone) protein is Kappa-conotoxin PVIIA.